We begin with the raw amino-acid sequence, 242 residues long: Biosynthetic peptidoglycan transglycosylase (242 aa).

Residues 19-39 (ILAALAVFWGGGIALFSVVPV) form a helical membrane-spanning segment.

This sequence belongs to the glycosyltransferase 51 family.

Its subcellular location is the cell inner membrane. The catalysed reaction is [GlcNAc-(1-&gt;4)-Mur2Ac(oyl-L-Ala-gamma-D-Glu-L-Lys-D-Ala-D-Ala)](n)-di-trans,octa-cis-undecaprenyl diphosphate + beta-D-GlcNAc-(1-&gt;4)-Mur2Ac(oyl-L-Ala-gamma-D-Glu-L-Lys-D-Ala-D-Ala)-di-trans,octa-cis-undecaprenyl diphosphate = [GlcNAc-(1-&gt;4)-Mur2Ac(oyl-L-Ala-gamma-D-Glu-L-Lys-D-Ala-D-Ala)](n+1)-di-trans,octa-cis-undecaprenyl diphosphate + di-trans,octa-cis-undecaprenyl diphosphate + H(+). Its pathway is cell wall biogenesis; peptidoglycan biosynthesis. Its function is as follows. Peptidoglycan polymerase that catalyzes glycan chain elongation from lipid-linked precursors. In Salmonella newport (strain SL254), this protein is Biosynthetic peptidoglycan transglycosylase.